Reading from the N-terminus, the 355-residue chain is DNA polymerase IV (355 aa).

The UmuC domain occupies Ile7–Gly188. Mg(2+)-binding residues include Asp11 and Asp106. Residue Glu107 is part of the active site.

The protein belongs to the DNA polymerase type-Y family. Monomer. The cofactor is Mg(2+).

It is found in the cytoplasm. The catalysed reaction is DNA(n) + a 2'-deoxyribonucleoside 5'-triphosphate = DNA(n+1) + diphosphate. Functionally, poorly processive, error-prone DNA polymerase involved in untargeted mutagenesis. Copies undamaged DNA at stalled replication forks, which arise in vivo from mismatched or misaligned primer ends. These misaligned primers can be extended by PolIV. Exhibits no 3'-5' exonuclease (proofreading) activity. May be involved in translesional synthesis, in conjunction with the beta clamp from PolIII. This Mannheimia succiniciproducens (strain KCTC 0769BP / MBEL55E) protein is DNA polymerase IV.